We begin with the raw amino-acid sequence, 230 residues long: MADS-box transcription factor 50 (230 aa).

One can recognise an MADS-box domain in the interval 1–61 (MVRGKTQMKR…GKLYEFASAS (61 aa)). Residues 86–176 (IEQVKADADG…REKCKNQPPL (91 aa)) enclose the K-box domain. The tract at residues 209–230 (GLPGRSRSSGGAAEDSQAMPHS) is disordered.

As to expression, expressed in mature leaves and at low levels in roots and young panicles.

Its subcellular location is the nucleus. In terms of biological role, probable transcription factor active in flowering time control. May control internode elongation and promote floral transition phase. May act upstream of the floral regulators MADS1, MADS14, MADS15 and MADS18 in the floral induction pathway. The sequence is that of MADS-box transcription factor 50 (MADS50) from Oryza sativa subsp. japonica (Rice).